We begin with the raw amino-acid sequence, 229 residues long: 23 kDa piroplasm membrane protein (229 aa).

A signal peptide spans 1 to 19 (MNKYFKVFFFVLLTHALKS). Residues 20–203 (ALIFGQATLQ…EKEDTNKKKY (184 aa)) lie on the Extracellular side of the membrane. Residues 204-224 (VLMVVVVVVFVVVASLVVFLV) traverse the membrane as a helical segment. Residues 225–229 (KFCLK) are Cytoplasmic-facing.

Its subcellular location is the membrane. The chain is 23 kDa piroplasm membrane protein from Theileria parva (East coast fever infection agent).